The following is a 399-amino-acid chain: Carbamoyl phosphate synthase arginine-specific small chain (399 aa).

The Glutamine amidotransferase type-1 domain occupies 187–379; the sequence is DVALVDCGVK…VERMRCYRKL (193 aa). Cysteine 267 functions as the Nucleophile in the catalytic mechanism. Residues histidine 352 and glutamate 354 contribute to the active site.

It belongs to the CarA family. As to quaternary structure, heterodimer composed of 2 chains; the small (or glutamine) chain promotes the hydrolysis of glutamine to ammonia, which is used by the large (or ammonia) chain to synthesize carbamoyl phosphate.

It is found in the cytoplasm. The enzyme catalyses hydrogencarbonate + L-glutamine + 2 ATP + H2O = carbamoyl phosphate + L-glutamate + 2 ADP + phosphate + 2 H(+). It catalyses the reaction L-glutamine + H2O = L-glutamate + NH4(+). It participates in amino-acid biosynthesis; L-arginine biosynthesis; carbamoyl phosphate from bicarbonate: step 1/1. Functionally, small subunit of the arginine-specific carbamoyl phosphate synthase (CPSase). CPSase catalyzes the formation of carbamoyl phosphate from the ammonia moiety of glutamine, carbonate, and phosphate donated by ATP, constituting the first step of 2 biosynthetic pathways, one leading to arginine and/or urea and the other to pyrimidine nucleotides. The small subunit (glutamine amidotransferase) binds and cleaves glutamine to supply the large subunit with the substrate ammonia. This chain is Carbamoyl phosphate synthase arginine-specific small chain (CPA1), found in Eremothecium gossypii (strain ATCC 10895 / CBS 109.51 / FGSC 9923 / NRRL Y-1056) (Yeast).